The chain runs to 219 residues: Phosphatidylserine decarboxylase proenzyme (219 aa).

Ser188 serves as the catalytic Schiff-base intermediate with substrate; via pyruvic acid. At Ser188 the chain carries Pyruvic acid (Ser); by autocatalysis.

It belongs to the phosphatidylserine decarboxylase family. PSD-A subfamily. In terms of assembly, heterodimer of a large membrane-associated beta subunit and a small pyruvoyl-containing alpha subunit. Pyruvate serves as cofactor. In terms of processing, is synthesized initially as an inactive proenzyme. Formation of the active enzyme involves a self-maturation process in which the active site pyruvoyl group is generated from an internal serine residue via an autocatalytic post-translational modification. Two non-identical subunits are generated from the proenzyme in this reaction, and the pyruvate is formed at the N-terminus of the alpha chain, which is derived from the carboxyl end of the proenzyme. The post-translation cleavage follows an unusual pathway, termed non-hydrolytic serinolysis, in which the side chain hydroxyl group of the serine supplies its oxygen atom to form the C-terminus of the beta chain, while the remainder of the serine residue undergoes an oxidative deamination to produce ammonia and the pyruvoyl prosthetic group on the alpha chain.

It is found in the cell membrane. The catalysed reaction is a 1,2-diacyl-sn-glycero-3-phospho-L-serine + H(+) = a 1,2-diacyl-sn-glycero-3-phosphoethanolamine + CO2. It participates in phospholipid metabolism; phosphatidylethanolamine biosynthesis; phosphatidylethanolamine from CDP-diacylglycerol: step 2/2. Functionally, catalyzes the formation of phosphatidylethanolamine (PtdEtn) from phosphatidylserine (PtdSer). In Trichlorobacter lovleyi (strain ATCC BAA-1151 / DSM 17278 / SZ) (Geobacter lovleyi), this protein is Phosphatidylserine decarboxylase proenzyme.